The following is a 155-amino-acid chain: Myosin light chain alkali (155 aa).

2 EF-hand domains span residues 7–41 (REVENVEFVFEVMGSPGEGIDAFDLGDALRALNLN) and 80–115 (GCYEDFIECLKLYDKEENGTMLLAELQHALLALGES).

Myosin is a hexamer of 2 heavy chains and 4 light chains.

This chain is Myosin light chain alkali (Mlc1), found in Drosophila virilis (Fruit fly).